The sequence spans 120 residues: NAD(P)H-quinone oxidoreductase subunit 3, chloroplastic (120 aa).

Transmembrane regions (helical) follow at residues 9-29 (IFWA…LISG), 64-84 (MFAL…PWAM), and 88-108 (VLGV…ILGL).

Belongs to the complex I subunit 3 family. In terms of assembly, NDH is composed of at least 16 different subunits, 5 of which are encoded in the nucleus.

Its subcellular location is the plastid. It is found in the chloroplast thylakoid membrane. It catalyses the reaction a plastoquinone + NADH + (n+1) H(+)(in) = a plastoquinol + NAD(+) + n H(+)(out). The enzyme catalyses a plastoquinone + NADPH + (n+1) H(+)(in) = a plastoquinol + NADP(+) + n H(+)(out). Its function is as follows. NDH shuttles electrons from NAD(P)H:plastoquinone, via FMN and iron-sulfur (Fe-S) centers, to quinones in the photosynthetic chain and possibly in a chloroplast respiratory chain. The immediate electron acceptor for the enzyme in this species is believed to be plastoquinone. Couples the redox reaction to proton translocation, and thus conserves the redox energy in a proton gradient. The chain is NAD(P)H-quinone oxidoreductase subunit 3, chloroplastic from Capsella bursa-pastoris (Shepherd's purse).